Reading from the N-terminus, the 590-residue chain is L-fucose isomerase (590 aa).

Residues Glu337 and Asp361 each act as proton acceptor in the active site. Glu337, Asp361, and His528 together coordinate Mn(2+).

The protein belongs to the L-fucose isomerase family. Requires Mn(2+) as cofactor.

It localises to the cytoplasm. It catalyses the reaction L-fucose = L-fuculose. It functions in the pathway carbohydrate degradation; L-fucose degradation; L-lactaldehyde and glycerone phosphate from L-fucose: step 1/3. Functionally, converts the aldose L-fucose into the corresponding ketose L-fuculose. The sequence is that of L-fucose isomerase from Bacteroides fragilis (strain ATCC 25285 / DSM 2151 / CCUG 4856 / JCM 11019 / LMG 10263 / NCTC 9343 / Onslow / VPI 2553 / EN-2).